Here is a 2715-residue protein sequence, read N- to C-terminus: Chromodomain-helicase-DNA-binding protein 6 (2715 aa).

Basic and acidic residues predominate over residues 1-11 (MKMKIQKKEKQ). Disordered stretches follow at residues 1-30 (MKMK…SVNF) and 66-244 (EEAA…QVKR). The tract at residues 1 to 747 (MKMKIQKKEK…MMELRKCCNH (747 aa)) is required for DNA-dependent ATPase activity. The span at 12–27 (LSNLKVLNHSPMSDAS) shows a compositional bias: polar residues. Basic and acidic residues predominate over residues 123–172 (EPKEPKEPRKAKEPKKAKEHKEPKQKDGAKKARKPREASGTKEAKEKRSC). Chromo domains lie at 292–343 (NIIE…KDPR) and 375–439 (VEVD…KHVE). The Helicase ATP-binding domain maps to 473–647 (LFNWYNRKNC…FSLLNFLEPS (175 aa)). 486 to 493 (DEMGLGKT) contributes to the ATP binding site. A DEAH box motif is present at residues 598 to 601 (DEAH). Residues 787–956 (LIDKLLPKLI…LSKMEVEDLL (170 aa)) enclose the Helicase C-terminal domain. A disordered region spans residues 1318 to 1390 (KSLSAEQGVT…SDPDKSPWPV (73 aa)). A compositionally biased stretch (polar residues) spans 1321–1330 (SAEQGVTDGT). Composition is skewed to basic and acidic residues over residues 1333-1351 (IPER…KVDG) and 1367-1376 (FSEKKDDSRA). A Myb-like domain is found at 1449–1503 (RWTRREQADFYRTVSSFGVVYDQEKKTFDWTQFRIISRLDKKSDESLEQYFYSFV). Residues 2027-2038 (FENKDDYDRDGN) show a composition bias toward basic and acidic residues. 6 disordered regions span residues 2027 to 2063 (FENK…ITGD), 2116 to 2148 (SQQY…AAEH), 2321 to 2351 (QATL…QAEK), 2373 to 2422 (PGFG…FLPE), 2547 to 2602 (TSTA…PAIT), and 2648 to 2715 (VGLE…NDTN). Residues 2116–2141 (SQQYEPSGTLPTPVLTSSAGSRTSLS) are compositionally biased toward polar residues. Low complexity predominate over residues 2329-2346 (PEGPGPATSAPEPATAAS). The span at 2547-2560 (TSTAPASLSSTTKS) shows a compositional bias: low complexity. 2 stretches are compositionally biased toward basic and acidic residues: residues 2567–2588 (KTAE…EDKP) and 2706–2715 (ALKDSNNDTN).

The protein belongs to the SNF2/RAD54 helicase family. As to quaternary structure, interacts with NFE2L2; involved in activation of the transcription. (Microbial infection) Interacts with the influenza A polymerase complex composed fo PB1, PB2 and PA. In terms of assembly, (Microbial infection) Interacts (via N-terminus) with human papillomavirus protein E8^E2C (via C-terminus); this interaction induces transcriptional repression of the viral genome. In terms of tissue distribution, widely expressed.

It is found in the nucleus. The protein localises to the nucleoplasm. It catalyses the reaction ATP + H2O = ADP + phosphate + H(+). In terms of biological role, ATP-dependent chromatin-remodeling factor. Regulates transcription by disrupting nucleosomes in a largely non-sliding manner which strongly increases the accessibility of chromatin; nucleosome disruption requires ATP. Activates transcription of specific genes in response to oxidative stress through interaction with NFE2L2. Its function is as follows. (Microbial infection) Acts as a transcriptional repressor of different viruses including influenza virus or papillomavirus. During influenza virus infection, the viral polymerase complex localizes CHD6 to inactive chromatin where it gets degraded in a proteasome independent-manner. This Homo sapiens (Human) protein is Chromodomain-helicase-DNA-binding protein 6 (CHD6).